A 71-amino-acid chain; its full sequence is Alpha-elapitoxin-Nn3a (71 aa).

5 cysteine pairs are disulfide-bonded: cysteine 3/cysteine 20, cysteine 14/cysteine 42, cysteine 26/cysteine 30, cysteine 46/cysteine 56, and cysteine 57/cysteine 62.

It belongs to the three-finger toxin family. Long-chain subfamily. Type II alpha-neurotoxin sub-subfamily. As to expression, expressed by the venom gland.

It localises to the secreted. In terms of biological role, nicotinic acetylcholine receptor antagonist. Binds to muscle nicotinic acetylcholine receptor (nAChR) and inhibits acetylcholine from binding to the receptor, thereby impairing neuromuscular transmission. Produces peripheral paralysis by blocking neuromuscular transmission at the postsynaptic site. Induces concentration-dependent inhibition of indirect twitches and abolishes contractile responses of tissues to exogenous acetylcholine and carbachol, in the chick biventer cervicis nerve-muscle preparation at 100-300 nM (in vitro). Prior incubation of tissues with Indian polyvalent antivenom (1 ml/0.6 mg) prevents the neurotoxic effects at 100 nM (in vitro). Addition of Indian polyvalent antivenom (1 ml/0.6 mg) at the t90 time point partially restores the neurotoxic effects (in vitro). Displays a reversible antagonism of concentration-response curves to carbachol, with a pA2 of 8.17 (in vitro). This chain is Alpha-elapitoxin-Nn3a, found in Naja naja (Indian cobra).